Consider the following 303-residue polypeptide: Phytochrome-associated serine/threonine-protein phosphatase (303 aa).

Positions 50, 52, 78, and 110 each coordinate Zn(2+). H111 serves as the catalytic Proton donor. Positions 160 and 234 each coordinate Zn(2+).

Belongs to the PPP phosphatase family. PP-6 (PP-V) subfamily. As to quaternary structure, interacts with PHYA and PHYB, mostly when they are phosphorylated and in Pfr forms. Zn(2+) is required as a cofactor. As to expression, mostly expressed in flowers and stems.

It is found in the cytoplasm. The catalysed reaction is O-phospho-L-seryl-[protein] + H2O = L-seryl-[protein] + phosphate. The enzyme catalyses O-phospho-L-threonyl-[protein] + H2O = L-threonyl-[protein] + phosphate. In terms of biological role, catalytic subunit of protein phosphatase 6 (PP6). Dephosphorylates phosphorylated phytochromes, with a preference toward Pfr forms. Plays a major role in the photoperiodic control of flowering time in long days by modulating phytochrome signals in flowering time control. In Pisum sativum (Garden pea), this protein is Phytochrome-associated serine/threonine-protein phosphatase.